A 434-amino-acid chain; its full sequence is MSDTVDIYDDRGKLLESNVDIMSLAPTRNAAIQSIIMDTKRSVAVNLAGIQGALASGKMGGKGRQILGRGLNYDIVGNADAIAENVKKLVQVDEGDDTNVIKVKGGKSLLIQSPKSRIIAGADFMSATTVGAAAVTQTIMDMFGTDPYDAPIVKSAVWGSYPQTMDLMGGQVQGILSIPQNNEGLGFSLRNIMANHVAAISNRNAMNASALSSIYEQSGIFEMGGAVGMFERHQLLGLAYQGLNANNLLYDIVKENGKDGTIGTVIESVVRRAIEAGIISVDKTAPSGYNFYKANDVPKWNACAAVGTLAATLVNCGAGRAAQNVSSTLLYFNDILEKETGLPGCDYGKVEGTAVGFSFFSHSIYGGGGPGVFNGNHVVTRHSRGFAIPCVCAAVALDAGTQMFSIESTSGLIGDVFGAIPEFREPIKAVAGVL.

Residue Tyr365 coordinates coenzyme M. Position 367 (Gly367) interacts with coenzyme B.

Belongs to the methyl-coenzyme M reductase beta subunit family. MCR is a hexamer of two alpha, two beta, and two gamma chains, forming a dimer of heterotrimers. The cofactor is coenzyme F430.

It localises to the cytoplasm. The catalysed reaction is coenzyme B + methyl-coenzyme M = methane + coenzyme M-coenzyme B heterodisulfide. The protein operates within one-carbon metabolism; methyl-coenzyme M reduction; methane from methyl-coenzyme M: step 1/1. Component of the methyl-coenzyme M reductase (MCR) I that catalyzes the reductive cleavage of methyl-coenzyme M (CoM-S-CH3 or 2-(methylthio)ethanesulfonate) using coenzyme B (CoB or 7-mercaptoheptanoylthreonine phosphate) as reductant which results in the production of methane and the mixed heterodisulfide of CoB and CoM (CoM-S-S-CoB). This is the final step in methanogenesis. The sequence is that of Methyl-coenzyme M reductase subunit beta (mcrB) from Methanosarcina barkeri (strain Fusaro / DSM 804).